The chain runs to 727 residues: Anaphase-promoting complex subunit 5 (727 aa).

Serine 180 bears the Phosphoserine mark. TPR repeat units lie at residues 194 to 234, 235 to 285, 286 to 322, 323 to 359, 360 to 390, 391 to 438, 439 to 472, 473 to 512, 513 to 552, 553 to 592, 593 to 632, 633 to 668, and 669 to 708; these read QKQA…FNPD, FAEA…GRSL, RYAA…SNDH, VCLQ…FGLP, RAFA…SELI, DISI…TESF, AVAL…FPPN, SQHA…ALNG, IEGV…TEMV, ISVL…QYLA, SETV…ILDK, GRAM…NLTE, and AKNY…CAMV. Threonine 217 carries the post-translational modification Phosphothreonine.

Belongs to the APC5 family. In terms of assembly, the mammalian APC/C is composed at least of 14 distinct subunits ANAPC1, ANAPC2, CDC27/APC3, ANAPC4, ANAPC5, CDC16/APC6, ANAPC7, CDC23/APC8, ANAPC10, ANAPC11, CDC26/APC12, ANAPC13, ANAPC15 and ANAPC16 that assemble into a complex of at least 19 chains with a combined molecular mass of around 1.2 MDa; APC/C interacts with FZR1 and FBXO5.

It localises to the nucleus. It is found in the cytoplasm. The protein localises to the cytoskeleton. Its subcellular location is the spindle. It participates in protein modification; protein ubiquitination. Functionally, component of the anaphase promoting complex/cyclosome (APC/C), a cell cycle-regulated E3 ubiquitin ligase that controls progression through mitosis and the G1 phase of the cell cycle. The APC/C complex acts by mediating ubiquitination and subsequent degradation of target proteins: it mainly mediates the formation of 'Lys-11'-linked polyubiquitin chains and, to a lower extent, the formation of 'Lys-48'- and 'Lys-63'-linked polyubiquitin chains. The APC/C complex catalyzes assembly of branched 'Lys-11'-/'Lys-48'-linked branched ubiquitin chains on target proteins. The chain is Anaphase-promoting complex subunit 5 (Anapc5) from Rattus norvegicus (Rat).